Consider the following 382-residue polypeptide: Porin-like protein BU359 (382 aa).

The N-terminal stretch at 1–23 (MTNRKSLAMVIPMLLAASNGVNA) is a signal peptide.

It belongs to the Gram-negative porin family. As to quaternary structure, homotrimer.

The protein resides in the cell outer membrane. In terms of biological role, forms pores that allow passive diffusion of small molecules across the membrane. The protein is Porin-like protein BU359 of Buchnera aphidicola subsp. Acyrthosiphon pisum (strain APS) (Acyrthosiphon pisum symbiotic bacterium).